A 420-amino-acid polypeptide reads, in one-letter code: Tyrosine--tRNA ligase (420 aa).

An L-tyrosine-binding site is contributed by Tyr33. The 'HIGH' region signature appears at 38 to 47 (PTADSLHVGH). L-tyrosine-binding residues include Tyr167 and Gln171. A 'KMSKS' region motif is present at residues 227-231 (KFGKT). Lys230 serves as a coordination point for ATP. Residues 353–419 (LTVADLLVKV…GKRNYALVKV (67 aa)) enclose the S4 RNA-binding domain.

It belongs to the class-I aminoacyl-tRNA synthetase family. TyrS type 1 subfamily. Homodimer.

Its subcellular location is the cytoplasm. It carries out the reaction tRNA(Tyr) + L-tyrosine + ATP = L-tyrosyl-tRNA(Tyr) + AMP + diphosphate + H(+). Functionally, catalyzes the attachment of tyrosine to tRNA(Tyr) in a two-step reaction: tyrosine is first activated by ATP to form Tyr-AMP and then transferred to the acceptor end of tRNA(Tyr). The sequence is that of Tyrosine--tRNA ligase from Anaeromyxobacter dehalogenans (strain 2CP-1 / ATCC BAA-258).